The chain runs to 386 residues: Methionyl-tRNA formyltransferase, mitochondrial (386 aa).

This sequence belongs to the Fmt family.

It localises to the mitochondrion. The catalysed reaction is L-methionyl-tRNA(fMet) + (6R)-10-formyltetrahydrofolate = N-formyl-L-methionyl-tRNA(fMet) + (6S)-5,6,7,8-tetrahydrofolate + H(+). Its function is as follows. Methionyl-tRNA formyltransferase that formylates methionyl-tRNA in mitochondria and is crucial for translation initiation. The polypeptide is Methionyl-tRNA formyltransferase, mitochondrial (Mtfmt) (Mus musculus (Mouse)).